We begin with the raw amino-acid sequence, 367 residues long: uncharacterized protein (367 aa).

A helical transmembrane segment spans residues 6–26; sequence IAAGVVVALAAVWCTSAWFTG.

This sequence to E.coli YdgA and YihF.

It is found in the membrane. This is an uncharacterized protein from Haemophilus influenzae (strain ATCC 51907 / DSM 11121 / KW20 / Rd).